A 112-amino-acid polypeptide reads, in one-letter code: Large ribosomal subunit protein bL17 (112 aa).

Belongs to the bacterial ribosomal protein bL17 family. Part of the 50S ribosomal subunit. Contacts protein L32.

This Moorella thermoacetica (strain ATCC 39073 / JCM 9320) protein is Large ribosomal subunit protein bL17.